We begin with the raw amino-acid sequence, 296 residues long: Bifunctional protein FolD (296 aa).

NADP(+) contacts are provided by residues 166–168 (GRS), S191, and I232.

It belongs to the tetrahydrofolate dehydrogenase/cyclohydrolase family. As to quaternary structure, homodimer.

It catalyses the reaction (6R)-5,10-methylene-5,6,7,8-tetrahydrofolate + NADP(+) = (6R)-5,10-methenyltetrahydrofolate + NADPH. It carries out the reaction (6R)-5,10-methenyltetrahydrofolate + H2O = (6R)-10-formyltetrahydrofolate + H(+). Its pathway is one-carbon metabolism; tetrahydrofolate interconversion. Functionally, catalyzes the oxidation of 5,10-methylenetetrahydrofolate to 5,10-methenyltetrahydrofolate and then the hydrolysis of 5,10-methenyltetrahydrofolate to 10-formyltetrahydrofolate. The chain is Bifunctional protein FolD from Cereibacter sphaeroides (strain ATCC 17029 / ATH 2.4.9) (Rhodobacter sphaeroides).